The primary structure comprises 181 residues: Thioredoxin-like protein CITRX2, chloroplastic (181 aa).

Residues 1-70 (MQAATLSFQP…PDVATGKYVR (70 aa)) constitute a chloroplast transit peptide. The 110-residue stretch at 72-181 (DYLVKKVSAK…MMRDIINNDL (110 aa)) folds into the Thioredoxin domain. Catalysis depends on nucleophile residues cysteine 104 and cysteine 107. A disulfide bridge connects residues cysteine 104 and cysteine 107.

Belongs to the thioredoxin family. Plant CITRX-type subfamily.

It localises to the plastid. It is found in the chloroplast. In terms of biological role, probable thiol-disulfide oxidoreductase that may play a role in proper chloroplast development. This is Thioredoxin-like protein CITRX2, chloroplastic from Nicotiana benthamiana.